A 630-amino-acid polypeptide reads, in one-letter code: Glutamyl-tRNA(Gln) amidotransferase subunit E (630 aa).

It belongs to the GatB/GatE family. GatE subfamily. As to quaternary structure, heterodimer of GatD and GatE.

It carries out the reaction L-glutamyl-tRNA(Gln) + L-glutamine + ATP + H2O = L-glutaminyl-tRNA(Gln) + L-glutamate + ADP + phosphate + H(+). In terms of biological role, allows the formation of correctly charged Gln-tRNA(Gln) through the transamidation of misacylated Glu-tRNA(Gln) in organisms which lack glutaminyl-tRNA synthetase. The reaction takes place in the presence of glutamine and ATP through an activated gamma-phospho-Glu-tRNA(Gln). The GatDE system is specific for glutamate and does not act on aspartate. This is Glutamyl-tRNA(Gln) amidotransferase subunit E from Methanocaldococcus jannaschii (strain ATCC 43067 / DSM 2661 / JAL-1 / JCM 10045 / NBRC 100440) (Methanococcus jannaschii).